The following is a 650-amino-acid chain: 1-deoxy-D-xylulose-5-phosphate synthase (650 aa).

Thiamine diphosphate is bound by residues H73 and 113-115 (SHA). Residue D145 participates in Mg(2+) binding. Thiamine diphosphate contacts are provided by residues 146–147 (GA), N175, Y287, and E369. Residue N175 coordinates Mg(2+).

The protein belongs to the transketolase family. DXPS subfamily. In terms of assembly, homodimer. The cofactor is Mg(2+). Thiamine diphosphate serves as cofactor.

It carries out the reaction D-glyceraldehyde 3-phosphate + pyruvate + H(+) = 1-deoxy-D-xylulose 5-phosphate + CO2. Its pathway is metabolic intermediate biosynthesis; 1-deoxy-D-xylulose 5-phosphate biosynthesis; 1-deoxy-D-xylulose 5-phosphate from D-glyceraldehyde 3-phosphate and pyruvate: step 1/1. In terms of biological role, catalyzes the acyloin condensation reaction between C atoms 2 and 3 of pyruvate and glyceraldehyde 3-phosphate to yield 1-deoxy-D-xylulose-5-phosphate (DXP). This Leifsonia xyli subsp. xyli (strain CTCB07) protein is 1-deoxy-D-xylulose-5-phosphate synthase.